Consider the following 255-residue polypeptide: Probable pyridoxal 5'-phosphate synthase subunit PDX2 (255 aa).

46 to 48 serves as a coordination point for L-glutamine; that stretch reads GES. Residue Cys-78 is the Nucleophile of the active site. Residues Arg-108 and 142-143 contribute to the L-glutamine site; that span reads IR. Residues His-202 and Glu-204 each act as charge relay system in the active site. Positions 225 to 255 are disordered; sequence GASSSSSKTIVSVGETSAGPEPAKPDLPIFQ.

The protein belongs to the glutaminase PdxT/SNO family. As to quaternary structure, interacts with PDX1.1 or PDX1.3, but not with PDX1.2. Binds to RPA2A. In terms of tissue distribution, strongly expressed in roots, stems, leaves and flowers.

It is found in the cytoplasm. The catalysed reaction is aldehydo-D-ribose 5-phosphate + D-glyceraldehyde 3-phosphate + L-glutamine = pyridoxal 5'-phosphate + L-glutamate + phosphate + 3 H2O + H(+). It carries out the reaction L-glutamine + H2O = L-glutamate + NH4(+). It participates in cofactor biosynthesis; pyridoxal 5'-phosphate biosynthesis. Functionally, catalyzes the hydrolysis of glutamine to glutamate and ammonia as part of the biosynthesis of pyridoxal 5'-phosphate. The resulting ammonia molecule is channeled to the active site of PDX1. Involved in the indirect resistance to singlet oxygen-generating photosensitizers. The protein is Probable pyridoxal 5'-phosphate synthase subunit PDX2 (PDX2) of Arabidopsis thaliana (Mouse-ear cress).